The following is a 504-amino-acid chain: Chromosomal replication initiator protein DnaA (504 aa).

The domain I, interacts with DnaA modulators stretch occupies residues 1–109 (MTADPDPPFV…PTDEPEDAPD (109 aa)). The tract at residues 98–162 (ATPTDEPEDA…PDTSSDDSNA (65 aa)) is disordered. Residues 109–125 (DSFADSPAPASVPAGPA) are compositionally biased toward low complexity. Residues 110-163 (SFADSPAPASVPAGPADADEIDDDRDARVNAQESWPKYFSRPEPDTSSDDSNAV) are domain II. The segment at 164–380 (NLNRRYTFDT…GALIRVTAFA (217 aa)) is domain III, AAA+ region. ATP-binding residues include G208, G210, K211, and T212. Positions 381–504 (SLNKTRIDRS…TTRIRQRAKR (124 aa)) are domain IV, binds dsDNA.

This sequence belongs to the DnaA family. Oligomerizes as a right-handed, spiral filament on DNA at oriC.

It is found in the cytoplasm. Plays an essential role in the initiation and regulation of chromosomal replication. ATP-DnaA binds to the origin of replication (oriC) to initiate formation of the DNA replication initiation complex once per cell cycle. Binds the DnaA box (a 9 base pair repeat at the origin) and separates the double-stranded (ds)DNA. Forms a right-handed helical filament on oriC DNA; dsDNA binds to the exterior of the filament while single-stranded (ss)DNA is stabiized in the filament's interior. The ATP-DnaA-oriC complex binds and stabilizes one strand of the AT-rich DNA unwinding element (DUE), permitting loading of DNA polymerase. After initiation quickly degrades to an ADP-DnaA complex that is not apt for DNA replication. Binds acidic phospholipids. Functionally, the probable consensus sequence for the DnaA box of this bacterium is 5'-TT(G/C)TCCACA-3'. The polypeptide is Chromosomal replication initiator protein DnaA (Mycolicibacterium smegmatis (strain ATCC 700084 / mc(2)155) (Mycobacterium smegmatis)).